The chain runs to 155 residues: MSRRGTAEEKTAKSDPIYRNRLVNMLVNRILKHGKKSLAYQIIYRAVKKIQQKTETNPLSVLRQAIRGVTPDIAVKARRVGGSTHQVPIEIGSTQGKALAIRWLLGASRKRPGRNMAFKLSSELVDAAKGSGDAIRKKEETHKMAEANRAFAHFR.

Belongs to the universal ribosomal protein uS7 family. As to quaternary structure, part of the 30S ribosomal subunit.

It is found in the plastid. Its subcellular location is the chloroplast. Its function is as follows. One of the primary rRNA binding proteins, it binds directly to 16S rRNA where it nucleates assembly of the head domain of the 30S subunit. This chain is Small ribosomal subunit protein uS7c (rps7), found in Butomus umbellatus (Flowering rush).